A 25-amino-acid polypeptide reads, in one-letter code: uncharacterized protein (25 aa).

The protein resides in the plastid. It is found in the chloroplast. This is an uncharacterized protein from Trieres chinensis (Marine centric diatom).